Consider the following 174-residue polypeptide: 3-hydroxyanthranilate 3,4-dioxygenase (174 aa).

Arg-47 lines the O2 pocket. Residues His-51, Glu-57, and His-95 each contribute to the Fe cation site. Position 57 (Glu-57) interacts with substrate. Arg-99 and Glu-110 together coordinate substrate. Cys-125, Cys-128, Cys-162, and Cys-165 together coordinate Fe cation.

It belongs to the 3-HAO family. Homodimer. It depends on Fe(2+) as a cofactor.

It catalyses the reaction 3-hydroxyanthranilate + O2 = (2Z,4Z)-2-amino-3-carboxymuconate 6-semialdehyde. Its pathway is cofactor biosynthesis; NAD(+) biosynthesis; quinolinate from L-kynurenine: step 3/3. With respect to regulation, inhibited by 4-chloro-3-hydroxyanthranilate. Mechanism of inactivation involves the oxidation of the catalytic active site Fe(2+) to the catalytically inactive Fe(3+) oxidation state, superoxide production, and formation of two disulfide bonds between Cys-125 and Cys-128, and Cys-162 and Cys-165. Enzyme can be reactivated under reducing conditions. Its function is as follows. Catalyzes the oxidative ring opening of 3-hydroxyanthranilate to 2-amino-3-carboxymuconate semialdehyde, which spontaneously cyclizes to quinolinate. In Cupriavidus metallidurans (strain ATCC 43123 / DSM 2839 / NBRC 102507 / CH34) (Ralstonia metallidurans), this protein is 3-hydroxyanthranilate 3,4-dioxygenase.